We begin with the raw amino-acid sequence, 336 residues long: Biotin synthase (336 aa).

In terms of domain architecture, Radical SAM core spans N55–R282. 3 residues coordinate [4Fe-4S] cluster: C70, C74, and C77. [2Fe-2S] cluster contacts are provided by C114, C145, C205, and R277.

It belongs to the radical SAM superfamily. Biotin synthase family. Homodimer. Requires [4Fe-4S] cluster as cofactor. [2Fe-2S] cluster is required as a cofactor.

It carries out the reaction (4R,5S)-dethiobiotin + (sulfur carrier)-SH + 2 reduced [2Fe-2S]-[ferredoxin] + 2 S-adenosyl-L-methionine = (sulfur carrier)-H + biotin + 2 5'-deoxyadenosine + 2 L-methionine + 2 oxidized [2Fe-2S]-[ferredoxin]. It functions in the pathway cofactor biosynthesis; biotin biosynthesis; biotin from 7,8-diaminononanoate: step 2/2. Its function is as follows. Catalyzes the conversion of dethiobiotin (DTB) to biotin by the insertion of a sulfur atom into dethiobiotin via a radical-based mechanism. This is Biotin synthase from Brucella anthropi (strain ATCC 49188 / DSM 6882 / CCUG 24695 / JCM 21032 / LMG 3331 / NBRC 15819 / NCTC 12168 / Alc 37) (Ochrobactrum anthropi).